We begin with the raw amino-acid sequence, 876 residues long: Alanine--tRNA ligase (876 aa).

An N6-acetyllysine modification is found at lysine 74. Zn(2+) contacts are provided by histidine 564, histidine 568, cysteine 666, and histidine 670.

Belongs to the class-II aminoacyl-tRNA synthetase family. In terms of assembly, homotetramer. Requires Zn(2+) as cofactor.

It localises to the cytoplasm. It catalyses the reaction tRNA(Ala) + L-alanine + ATP = L-alanyl-tRNA(Ala) + AMP + diphosphate. Its function is as follows. Catalyzes the attachment of alanine to tRNA(Ala) in a two-step reaction: alanine is first activated by ATP to form Ala-AMP and then transferred to the acceptor end of tRNA(Ala). Also edits incorrectly charged Ser-tRNA(Ala) and Gly-tRNA(Ala) via its editing domain. The protein is Alanine--tRNA ligase of Escherichia coli (strain SMS-3-5 / SECEC).